Reading from the N-terminus, the 30-residue chain is EVIAQLTMIAMIGIAGPMIIFLLAVRRGNL.

The Lumenal portion of the chain corresponds to 1–6 (EVIAQL). A helical membrane pass occupies residues 7-21 (TMIAMIGIAGPMIIF). Over 22-30 (LLAVRRGNL) the chain is Cytoplasmic.

Belongs to the Psb30/Ycf12 family. In terms of assembly, PSII is composed of 1 copy each of membrane proteins PsbA, PsbB, PsbC, PsbD, PsbE, PsbF, PsbH, PsbI, PsbJ, PsbK, PsbL, PsbM, PsbT, PsbX, PsbY, PsbZ, Psb30/Ycf12, peripheral proteins PsbO, CyanoQ (PsbQ), PsbU, PsbV and a large number of cofactors. It forms dimeric complexes. The cofactor is PSII binds multiple chlorophylls, carotenoids and specific lipids..

It is found in the cellular thylakoid membrane. A core subunit of photosystem II (PSII), probably helps stabilize the reaction center. PSII is a light-driven water plastoquinone oxidoreductase, using light energy to abstract electrons from H(2)O, generating a proton gradient subsequently used for ATP formation. This is Photosystem II reaction center protein Psb30 from Thermostichus vulcanus (Synechococcus vulcanus).